The sequence spans 419 residues: Protein phosphatase methylesterase 1 (419 aa).

Positions Met1–Pro12 are enriched in basic residues. The tract at residues Met1–Ala75 is disordered. Over residues Thr32–Gly52 the composition is skewed to acidic residues. Catalysis depends on residues Ser230, Asp256, and His383.

The protein belongs to the AB hydrolase superfamily.

The catalysed reaction is [phosphatase 2A protein]-C-terminal L-leucine methyl ester + H2O = [phosphatase 2A protein]-C-terminal L-leucine + methanol + H(+). In terms of biological role, demethylates proteins that have been reversibly carboxymethylated. Demethylates the phosphatase PP2A catalytic subunit. In Yarrowia lipolytica (strain CLIB 122 / E 150) (Yeast), this protein is Protein phosphatase methylesterase 1 (PPE1).